Consider the following 584-residue polypeptide: Beta-(1--&gt;2)glucan export ATP-binding/permease protein NdvA (584 aa).

Positions 21–301 (VSLVVAANII…MRQFSTQIFE (281 aa)) constitute an ABC transmembrane type-1 domain. The next 6 helical transmembrane spans lie at 29–49 (IILA…IDAI), 57–77 (DILF…VLVA), 136–156 (THLA…SMDV), 158–178 (LTLV…MVMD), 248–268 (IAST…VQSG), and 272–292 (VGDV…LDQM). Residues 335–569 (VEFRHVSFDF…GGRFAALLHT (235 aa)) form the ABC transporter domain. 368-375 (GPTGAGKT) is an ATP binding site.

It belongs to the ABC transporter superfamily. Beta-(1--&gt;2)glucan exporter (TC 3.A.1.108.1) family. In terms of assembly, homodimer.

The protein resides in the cell inner membrane. The catalysed reaction is [(1-&gt;2)-beta-D-glucosyl](n)(in) + ATP + H2O = [(1-&gt;2)-beta-D-glucosyl](n)(out) + ADP + phosphate + H(+). Its function is as follows. Involved in beta-(1--&gt;2)glucan export. Transmembrane domains (TMD) form a pore in the inner membrane and the ATP-binding domain (NBD) is responsible for energy generation. The sequence is that of Beta-(1--&gt;2)glucan export ATP-binding/permease protein NdvA from Agrobacterium vitis (Rhizobium vitis).